We begin with the raw amino-acid sequence, 225 residues long: MRSSKNVIKEFMRFKVRMEGTVNGHEFEIEGEGEGRPYEGHNTVKLKVTKGGPLPFAWDILSPQFQYGSKVYVKHPADIPDYKKLSFPEGFKWERVMNFEDGGVVTVTQDSSLQDGCFIYKVKFIGVNFPSDGPVMQKKTMGWEASTERLYPRDGVLKGEIHKALKLKDGGHYLVEFKSIYMAKKPVQLPGYYYVDSKLDITSHNEDYTIVEQYERTEGRHHLFL.

The 2-iminomethyl-5-imidazolinone (Gln-Gly) cross-link spans 66-68; the sequence is QYG. The residue at position 67 (Tyr67) is a (Z)-2,3-didehydrotyrosine.

This sequence belongs to the GFP family. In terms of assembly, homotetramer. Post-translationally, contains a chromophore consisting of modified amino acid residues. The chromophore is formed by autocatalytic backbone condensation between Xaa-N and Gly-(N+2), oxidation of Tyr-(N+1) to didehydrotyrosine, and formation of a double bond to the alpha-amino nitrogen of residue Xaa-N. Maturation of the chromophore requires nothing other than molecular oxygen.

In terms of biological role, thought to play a role in photoprotection of the coral's resident symbiont microalgae's photosystems from photoinhibition caused by high light levels found near the surface of coral reefs. In deeper water, the fluorescence may be to convert blue light into longer wavelengths more suitable for use in photosynthesis by the microalgal symbionts. The polypeptide is Red fluorescent protein drFP583 (Discosoma sp. (Sea anemone)).